Reading from the N-terminus, the 284-residue chain is 4-hydroxybenzoate octaprenyltransferase (284 aa).

A run of 8 helical transmembrane segments spans residues 18-38 (PIGT…AAEG), 42-62 (WHVL…GCVI), 93-113 (IILF…MNPL), 136-156 (HLPQ…AWAA), 161-181 (LPWV…AYDT), 209-229 (LIIG…GLHY), 233-253 (QSFY…QHLI), and 264-284 (AFLN…VAFW).

It belongs to the UbiA prenyltransferase family. It depends on Mg(2+) as a cofactor.

The protein localises to the cell inner membrane. It catalyses the reaction all-trans-octaprenyl diphosphate + 4-hydroxybenzoate = 4-hydroxy-3-(all-trans-octaprenyl)benzoate + diphosphate. It functions in the pathway cofactor biosynthesis; ubiquinone biosynthesis. Catalyzes the prenylation of para-hydroxybenzoate (PHB) with an all-trans polyprenyl group. Mediates the second step in the final reaction sequence of ubiquinone-8 (UQ-8) biosynthesis, which is the condensation of the polyisoprenoid side chain with PHB, generating the first membrane-bound Q intermediate 3-octaprenyl-4-hydroxybenzoate. This chain is 4-hydroxybenzoate octaprenyltransferase, found in Vibrio vulnificus (strain CMCP6).